The sequence spans 270 residues: MKIVLVSRIDEADALRYTASLARELEGLGHEVALEEGTAAHLGEGGISFEEIDGDLVVVVGGDGSVLLTVHQMKKQVPVLGINWGEVGFLADLEPDEAGTFFAAHTEGFHIERRMRVSLSVNGVPLGDALNEGLVVTDRPAKMLRFGVYVDGTPAERFRADGLLVSTPTGSTAYAMSAGGPIVDPQIEGFLLVPLAPYMLSSRPHLISTGRNLEITLETEKPAHLVIDGQSTFELEKEATLTVKKSDQPALFVHTGKPFFEKVNHKLRNL.

The active-site Proton acceptor is the aspartate 63. NAD(+) is bound by residues 63–64 (DG), 131–132 (NE), lysine 142, arginine 159, aspartate 161, 172–177 (TAYAMS), alanine 196, and glutamine 230.

It belongs to the NAD kinase family. A divalent metal cation is required as a cofactor.

It localises to the cytoplasm. It carries out the reaction NAD(+) + ATP = ADP + NADP(+) + H(+). Its function is as follows. Involved in the regulation of the intracellular balance of NAD and NADP, and is a key enzyme in the biosynthesis of NADP. Catalyzes specifically the phosphorylation on 2'-hydroxyl of the adenosine moiety of NAD to yield NADP. In Methanoculleus marisnigri (strain ATCC 35101 / DSM 1498 / JR1), this protein is NAD kinase.